A 353-amino-acid chain; its full sequence is Phenol hydroxylase P5 protein (353 aa).

Residues 3 to 93 enclose the 2Fe-2S ferredoxin-type domain; sequence YQVTIEPIGT…DMVIEADVDE (91 aa). [2Fe-2S] cluster contacts are provided by Cys-37, Cys-42, Cys-45, and Cys-77. An FAD-binding FR-type domain is found at 102-201; the sequence is VQDYQATVIE…SGPYGQFFVR (100 aa).

As to quaternary structure, the multicomponent enzyme phenol hydroxylase is formed by P0, P1, P2, P3, P4 and P5 polypeptides. It depends on FAD as a cofactor. Requires [2Fe-2S] cluster as cofactor.

It catalyses the reaction phenol + NADPH + O2 + H(+) = catechol + NADP(+) + H2O. The protein operates within aromatic compound metabolism; phenol degradation. Its function is as follows. Catabolizes phenol, and some of its methylated derivatives. P5 is required for growth on phenol, and for in vitro phenol hydroxylase activity. Probable electron transfer from NADPH, via FAD and the 2Fe-2S center, to the oxygenase activity site of the enzyme. The sequence is that of Phenol hydroxylase P5 protein (mphP) from Acinetobacter pittii (strain PHEA-2).